Reading from the N-terminus, the 478-residue chain is 3-isopropylmalate dehydratase large subunit (478 aa).

[4Fe-4S] cluster-binding residues include Cys-359, Cys-420, and Cys-423.

It belongs to the aconitase/IPM isomerase family. LeuC type 1 subfamily. In terms of assembly, heterodimer of LeuC and LeuD. The cofactor is [4Fe-4S] cluster.

The enzyme catalyses (2R,3S)-3-isopropylmalate = (2S)-2-isopropylmalate. Its pathway is amino-acid biosynthesis; L-leucine biosynthesis; L-leucine from 3-methyl-2-oxobutanoate: step 2/4. Functionally, catalyzes the isomerization between 2-isopropylmalate and 3-isopropylmalate, via the formation of 2-isopropylmaleate. This chain is 3-isopropylmalate dehydratase large subunit, found in Psychrobacter sp. (strain PRwf-1).